Here is a 228-residue protein sequence, read N- to C-terminus: Cytochrome c oxidase subunit 2 (228 aa).

Residues 1–26 (MATWANLGLQDSSSPLMEQLNFFHDH) are Mitochondrial intermembrane-facing. The chain crosses the membrane as a helical span at residues 27 to 47 (TLLILTMITILVGYIMGMLMF). Residues 48 to 60 (NQFTNRYLLHGQT) are Mitochondrial matrix-facing. The chain crosses the membrane as a helical span at residues 61 to 81 (IEIIWTVLPAIILMFIALPSL). Topologically, residues 82–228 (RLLYLMDEIN…FIKWITNMTN (147 aa)) are mitochondrial intermembrane. Cu cation-binding residues include histidine 161, cysteine 196, glutamate 198, cysteine 200, histidine 204, and methionine 207. Mg(2+) is bound at residue glutamate 198.

This sequence belongs to the cytochrome c oxidase subunit 2 family. As to quaternary structure, component of the cytochrome c oxidase (complex IV, CIV), a multisubunit enzyme composed of a catalytic core of 3 subunits and several supernumerary subunits. The complex exists as a monomer or a dimer and forms supercomplexes (SCs) in the inner mitochondrial membrane with ubiquinol-cytochrome c oxidoreductase (cytochrome b-c1 complex, complex III, CIII). Cu cation serves as cofactor.

The protein localises to the mitochondrion inner membrane. It catalyses the reaction 4 Fe(II)-[cytochrome c] + O2 + 8 H(+)(in) = 4 Fe(III)-[cytochrome c] + 2 H2O + 4 H(+)(out). Component of the cytochrome c oxidase, the last enzyme in the mitochondrial electron transport chain which drives oxidative phosphorylation. The respiratory chain contains 3 multisubunit complexes succinate dehydrogenase (complex II, CII), ubiquinol-cytochrome c oxidoreductase (cytochrome b-c1 complex, complex III, CIII) and cytochrome c oxidase (complex IV, CIV), that cooperate to transfer electrons derived from NADH and succinate to molecular oxygen, creating an electrochemical gradient over the inner membrane that drives transmembrane transport and the ATP synthase. Cytochrome c oxidase is the component of the respiratory chain that catalyzes the reduction of oxygen to water. Electrons originating from reduced cytochrome c in the intermembrane space (IMS) are transferred via the dinuclear copper A center (CU(A)) of subunit 2 and heme A of subunit 1 to the active site in subunit 1, a binuclear center (BNC) formed by heme A3 and copper B (CU(B)). The BNC reduces molecular oxygen to 2 water molecules using 4 electrons from cytochrome c in the IMS and 4 protons from the mitochondrial matrix. The sequence is that of Cytochrome c oxidase subunit 2 (COXII) from Anopheles quadrimaculatus (Common malaria mosquito).